Consider the following 122-residue polypeptide: Large ribosomal subunit protein bL19 (122 aa).

Belongs to the bacterial ribosomal protein bL19 family.

In terms of biological role, this protein is located at the 30S-50S ribosomal subunit interface and may play a role in the structure and function of the aminoacyl-tRNA binding site. The chain is Large ribosomal subunit protein bL19 from Prosthecochloris aestuarii (strain DSM 271 / SK 413).